We begin with the raw amino-acid sequence, 267 residues long: Integral membrane protein 2C (267 aa).

Thr-37 carries the phosphothreonine modification. A helical; Signal-anchor for type II membrane protein transmembrane segment spans residues 55-75; it reads VGGVCYLSMGMVVLLMGLVFA. Positions 136 to 230 constitute a BRICHOS domain; the sequence is FGGGDPADII…LCNGKDTYRL (95 aa). Cys-163 and Cys-222 form a disulfide bridge. The N-linked (GlcNAc...) asparagine glycan is linked to Asn-169.

This sequence belongs to the ITM2 family. As to quaternary structure, interacts with BACE1. Interacts with APP. Interacts with STMN2. Post-translationally, type I membrane-bound, as well as soluble, furin has a pre-eminent role in ITM2C proteolytic processing. PCSK7 and PCSK5 may also be involved although to a lesser extent. The soluble form of PCSK7 is incapable of processing ITM2C. Fails to undergo shedding by ADAM10 and intramembrane cleavage by SPPL2B.

The protein localises to the lysosome membrane. Its subcellular location is the cell membrane. Negative regulator of amyloid-beta peptide production. May inhibit the processing of APP by blocking its access to alpha- and beta-secretase. Binding to the beta-secretase-cleaved APP C-terminal fragment is negligible, suggesting that ITM2C is a poor gamma-secretase cleavage inhibitor. May play a role in TNF-induced cell death and neuronal differentiation. The chain is Integral membrane protein 2C (ITM2C) from Pongo abelii (Sumatran orangutan).